The following is a 170-amino-acid chain: MKGKYFIPCLLLPTMMLASGGGGETDIVERTINFVIFIAIFYYLAADKIKAIFVARQESIAAELEKVQEKLKESKKAKEQAQKRFEESKRMAEDVILTAKKEVVLLTQKVEDSTKGDIENLIRQYNDSMEFEKRKAERAIIDEILAELFESDATKLDKSAYSEILLKKVA.

Residues 5–25 (YFIPCLLLPTMMLASGGGGET) form a helical membrane-spanning segment.

Belongs to the ATPase B chain family. F-type ATPases have 2 components, F(1) - the catalytic core - and F(0) - the membrane proton channel. F(1) has five subunits: alpha(3), beta(3), gamma(1), delta(1), epsilon(1). F(0) has three main subunits: a(1), b(2) and c(10-14). The alpha and beta chains form an alternating ring which encloses part of the gamma chain. F(1) is attached to F(0) by a central stalk formed by the gamma and epsilon chains, while a peripheral stalk is formed by the delta and b chains.

It is found in the cell inner membrane. F(1)F(0) ATP synthase produces ATP from ADP in the presence of a proton or sodium gradient. F-type ATPases consist of two structural domains, F(1) containing the extramembraneous catalytic core and F(0) containing the membrane proton channel, linked together by a central stalk and a peripheral stalk. During catalysis, ATP synthesis in the catalytic domain of F(1) is coupled via a rotary mechanism of the central stalk subunits to proton translocation. Its function is as follows. Component of the F(0) channel, it forms part of the peripheral stalk, linking F(1) to F(0). This chain is ATP synthase subunit b, found in Wolinella succinogenes (strain ATCC 29543 / DSM 1740 / CCUG 13145 / JCM 31913 / LMG 7466 / NCTC 11488 / FDC 602W) (Vibrio succinogenes).